The following is a 129-amino-acid chain: Azurin-2 (129 aa).

In terms of domain architecture, Plastocyanin-like spans 1 to 129; it reads AQCEATVESN…MMKGTLKLGS (129 aa). A disulfide bridge links cysteine 3 with cysteine 26. Residues histidine 46, cysteine 112, histidine 117, and methionine 121 each contribute to the Cu cation site.

The protein resides in the periplasm. Transfers electrons from cytochrome c551 to cytochrome oxidase. This is Azurin-2 from Alcaligenes xylosoxydans xylosoxydans (Achromobacter xylosoxidans).